Reading from the N-terminus, the 635-residue chain is 1-deoxy-D-xylulose-5-phosphate synthase (635 aa).

Thiamine diphosphate-binding positions include His77 and 118–120 (GHA). Residue Asp150 coordinates Mg(2+). Residues 151 to 152 (AS), Asn179, Tyr290, and Glu372 contribute to the thiamine diphosphate site. Position 179 (Asn179) interacts with Mg(2+).

It belongs to the transketolase family. DXPS subfamily. As to quaternary structure, homodimer. Mg(2+) is required as a cofactor. Requires thiamine diphosphate as cofactor.

The enzyme catalyses D-glyceraldehyde 3-phosphate + pyruvate + H(+) = 1-deoxy-D-xylulose 5-phosphate + CO2. It functions in the pathway metabolic intermediate biosynthesis; 1-deoxy-D-xylulose 5-phosphate biosynthesis; 1-deoxy-D-xylulose 5-phosphate from D-glyceraldehyde 3-phosphate and pyruvate: step 1/1. Catalyzes the acyloin condensation reaction between C atoms 2 and 3 of pyruvate and glyceraldehyde 3-phosphate to yield 1-deoxy-D-xylulose-5-phosphate (DXP). The sequence is that of 1-deoxy-D-xylulose-5-phosphate synthase from Leptospira borgpetersenii serovar Hardjo-bovis (strain JB197).